Here is a 270-residue protein sequence, read N- to C-terminus: Nuclear receptor-interacting protein 2 (270 aa).

Residues 1–27 are compositionally biased toward basic and acidic residues; that stretch reads MSTGQEARRDEGDSRKEQEASLRDRAH. The interval 1-33 is disordered; that stretch reads MSTGQEARRDEGDSRKEQEASLRDRAHLSQQRQ. Positions 61-99 are interaction with NR1F2; that stretch reads KDLQPHSVIQRRLVEGNQRRLQGESPLLQALIRGHDSSR. The LXXLL motif motif lies at 192–196; that stretch reads LQTLL.

As to quaternary structure, interacts with NR1F2, RARA and THRB in a ligand-dependent manner. Expression is restricted to the central nervous system (neurons in the dentate gyrus of the hippocampus, the amygdala, thalamic and hypothalamic regions).

The protein resides in the nucleus. Functionally, down-regulates transcriptional activation by nuclear receptors, such as NR1F2. The polypeptide is Nuclear receptor-interacting protein 2 (Nrip2) (Mus musculus (Mouse)).